Here is a 140-residue protein sequence, read N- to C-terminus: Phospholipase A2 (140 aa).

The N-terminal stretch at 1–21 (MNPAHLLVLAAVCISLSGASS) is a signal peptide. Positions 22-27 (IAPQPL) are excised as a propeptide. Intrachain disulfides connect cysteine 38–cysteine 97, cysteine 52–cysteine 139, cysteine 54–cysteine 70, cysteine 69–cysteine 125, cysteine 76–cysteine 118, cysteine 86–cysteine 111, and cysteine 104–cysteine 116. Asparagine 39 carries an N-linked (GlcNAc...) asparagine glycan. The Ca(2+) site is built by tyrosine 53, glycine 55, and glycine 57. Histidine 73 is an active-site residue. Residue aspartate 74 coordinates Ca(2+). Asparagine 107 carries an N-linked (GlcNAc...) asparagine glycan. Residue aspartate 119 is part of the active site.

It belongs to the phospholipase A2 family. Group I subfamily. D49 sub-subfamily. Ca(2+) serves as cofactor. Expressed by the venom gland.

The protein resides in the secreted. The enzyme catalyses a 1,2-diacyl-sn-glycero-3-phosphocholine + H2O = a 1-acyl-sn-glycero-3-phosphocholine + a fatty acid + H(+). PLA2 catalyzes the calcium-dependent hydrolysis of the 2-acyl groups in 3-sn-phosphoglycerides. In Micrurus altirostris (Uruguayan coral snake), this protein is Phospholipase A2.